Here is a 290-residue protein sequence, read N- to C-terminus: Nucleoid occlusion protein (290 aa).

A DNA-binding region (H-T-H motif) is located at residues Glu-153–Leu-172.

It belongs to the ParB family.

Its subcellular location is the cytoplasm. It is found in the nucleoid. Functionally, effects nucleoid occlusion by binding relatively nonspecifically to DNA and preventing the assembly of the division machinery in the vicinity of the nucleoid, especially under conditions that disturb the cell cycle. It helps to coordinate cell division and chromosome segregation by preventing the formation of the Z ring through the nucleoid, which would cause chromosome breakage. The chain is Nucleoid occlusion protein from Bacillus anthracis (strain A0248).